The following is a 246-amino-acid chain: MAGHSKWANIKHRKAAQDAKRGKIFTKLIREITTSARLGDADPANNPRLRAAVAAALTGNMTRDTINRAIQRGAGGGDGEQLETIVYEGYGPAGSAVMVECLTDNRNRTVAEVRHAFSKCGGNLGTDGSVAYLFSKKGLLTFVGVDEDALMDAALEAGADDVVTEEDGSIEVYTTPNDFGTVLDGLEAAGFKPQSAEVTMIPSTEAELDAETAPKLMRLIDMLEDLDDVQEVYHNGSISDEVAATL.

It belongs to the TACO1 family.

The protein resides in the cytoplasm. This Aeromonas hydrophila subsp. hydrophila (strain ATCC 7966 / DSM 30187 / BCRC 13018 / CCUG 14551 / JCM 1027 / KCTC 2358 / NCIMB 9240 / NCTC 8049) protein is Probable transcriptional regulatory protein AHA_1522.